The following is a 465-amino-acid chain: VGFKAGVKEYKLNYYTPDYDTKDTDILAAFRVSPQPGVPPEEAGAAVAAESSTGTWTTVWTDGLTSLDRYKGRCYEIEPVAGEENQFIAYVAYPLDLFEEGSVTNMLTSIVGNVFGFKALRALRLEDLRIPPAYTKTFQGPPHGIQVERDKLNKYGRPLLGCTIKPKLGLSAKNYGRAVYECLRGGLDFTKDDENVNSQPFMRWRDRFLFCAEALFKAQAETGEIKGHYLNATAGTCEEMIKRAVFARELGVPIVMHDYLTGGFTANTSLAHYCRDNGLLLHIHRAMHAVIDRQKNHGMHFRVLAKALRMSGGDHIHAGTVVGKLEGEREITLGFVDLLRDDFVEKDRSRGIYFTQDWVSLPGVLPVASGGIHVWHMPALTEIFGDDSVLQFGGGTLGHPWGNAPGAVANRVALEACVKARNEGRDLAREGNEIIREASKWSPELAAACEVWKEIKFEFQAMDTL.

N6,N6,N6-trimethyllysine is present on Lys4. The substrate site is built by Asn113 and Thr163. Lys165 serves as the catalytic Proton acceptor. Lys167 serves as a coordination point for substrate. The Mg(2+) site is built by Lys191, Asp193, and Glu194. Lys191 carries the N6-carboxylysine modification. Residue His284 is the Proton acceptor of the active site. Arg285, His317, and Ser369 together coordinate substrate.

This sequence belongs to the RuBisCO large chain family. Type I subfamily. Heterohexadecamer of 8 large chains and 8 small chains; disulfide-linked. The disulfide link is formed within the large subunit homodimers. Mg(2+) serves as cofactor. The disulfide bond which can form in the large chain dimeric partners within the hexadecamer appears to be associated with oxidative stress and protein turnover.

The protein localises to the plastid. It is found in the chloroplast. It catalyses the reaction 2 (2R)-3-phosphoglycerate + 2 H(+) = D-ribulose 1,5-bisphosphate + CO2 + H2O. It carries out the reaction D-ribulose 1,5-bisphosphate + O2 = 2-phosphoglycolate + (2R)-3-phosphoglycerate + 2 H(+). Its function is as follows. RuBisCO catalyzes two reactions: the carboxylation of D-ribulose 1,5-bisphosphate, the primary event in carbon dioxide fixation, as well as the oxidative fragmentation of the pentose substrate in the photorespiration process. Both reactions occur simultaneously and in competition at the same active site. The protein is Ribulose bisphosphate carboxylase large chain of Ilex crenata (Japanese holly).